Here is a 291-residue protein sequence, read N- to C-terminus: Elongation factor Ts (291 aa).

Residues 79 to 82 (TDFV) are involved in Mg(2+) ion dislocation from EF-Tu.

The protein belongs to the EF-Ts family.

It localises to the cytoplasm. In terms of biological role, associates with the EF-Tu.GDP complex and induces the exchange of GDP to GTP. It remains bound to the aminoacyl-tRNA.EF-Tu.GTP complex up to the GTP hydrolysis stage on the ribosome. In Anaplasma marginale (strain Florida), this protein is Elongation factor Ts.